The chain runs to 318 residues: Glutathione synthetase (318 aa).

One can recognise an ATP-grasp domain in the interval 128 to 313 (KLAILNFSRF…VAAMFADAVA (186 aa)). 154-210 (LKEHGDIIIKPLDGMGGMGIFRLTEKDPNIGSILETLMQLDSRTIMAQRYIPEIVHG) serves as a coordination point for ATP. Glu-284 and Asn-286 together coordinate Mg(2+).

It belongs to the prokaryotic GSH synthase family. Mg(2+) is required as a cofactor. Mn(2+) serves as cofactor.

It carries out the reaction gamma-L-glutamyl-L-cysteine + glycine + ATP = glutathione + ADP + phosphate + H(+). The protein operates within sulfur metabolism; glutathione biosynthesis; glutathione from L-cysteine and L-glutamate: step 2/2. This is Glutathione synthetase from Neisseria meningitidis serogroup A / serotype 4A (strain DSM 15465 / Z2491).